Consider the following 451-residue polypeptide: Chromosomal replication initiator protein DnaA (451 aa).

A domain I, interacts with DnaA modulators region spans residues 1 to 71; sequence MSEKEIWDKV…QAIIYDVIGY (71 aa). Positions 71-112 are domain II; it reads YEVKPHFISEDELASYNNVNTQEVQEPQVQHSSIDDKTWGKE. A domain III, AAA+ region region spans residues 113-329; it reads QFNMHNTFDT…GALTRLLAYS (217 aa). Positions 157, 159, 160, and 161 each coordinate ATP. Positions 330-451 are domain IV, binds dsDNA; sequence KLQGKPITTE…ENLEKEIRNQ (122 aa).

The protein belongs to the DnaA family. As to quaternary structure, oligomerizes as a right-handed, spiral filament on DNA at oriC.

The protein resides in the cytoplasm. Plays an essential role in the initiation and regulation of chromosomal replication. ATP-DnaA binds to the origin of replication (oriC) to initiate formation of the DNA replication initiation complex once per cell cycle. Binds the DnaA box (a 9 base pair repeat at the origin) and separates the double-stranded (ds)DNA. Forms a right-handed helical filament on oriC DNA; dsDNA binds to the exterior of the filament while single-stranded (ss)DNA is stabiized in the filament's interior. The ATP-DnaA-oriC complex binds and stabilizes one strand of the AT-rich DNA unwinding element (DUE), permitting loading of DNA polymerase. After initiation quickly degrades to an ADP-DnaA complex that is not apt for DNA replication. Binds acidic phospholipids. The protein is Chromosomal replication initiator protein DnaA of Staphylococcus epidermidis (strain ATCC 35984 / DSM 28319 / BCRC 17069 / CCUG 31568 / BM 3577 / RP62A).